A 165-amino-acid chain; its full sequence is Protein FAM219A (165 aa).

An N-acetylmethionine modification is found at methionine 1. Positions 1–114 are disordered; it reads MMEEIDRFQV…SRYSSSGYSS (114 aa). Over residues 32 to 44 the composition is skewed to basic and acidic residues; sequence CDAREEKQRELAR. The span at 49-63 shows a compositional bias: polar residues; the sequence is KNGSMGSPVNQQPKK. Residues serine 55 and serine 85 each carry the phosphoserine modification. A Phosphothreonine modification is found at threonine 96. Serine 98 and serine 105 each carry phosphoserine. Residues 105-114 are compositionally biased toward low complexity; that stretch reads SRYSSSGYSS.

The protein belongs to the FAM219 family.

The protein is Protein FAM219A (FAM219A) of Macaca fascicularis (Crab-eating macaque).